The chain runs to 301 residues: Porphobilinogen deaminase (301 aa).

Position 242 is an S-(dipyrrolylmethanemethyl)cysteine (Cys-242).

It belongs to the HMBS family. Monomer. The cofactor is dipyrromethane.

The enzyme catalyses 4 porphobilinogen + H2O = hydroxymethylbilane + 4 NH4(+). It functions in the pathway porphyrin-containing compound metabolism; protoporphyrin-IX biosynthesis; coproporphyrinogen-III from 5-aminolevulinate: step 2/4. Tetrapolymerization of the monopyrrole PBG into the hydroxymethylbilane pre-uroporphyrinogen in several discrete steps. The protein is Porphobilinogen deaminase of Rickettsia canadensis (strain McKiel).